Reading from the N-terminus, the 748-residue chain is Cysteine--tRNA ligase, cytoplasmic (748 aa).

Positions 1-25 (MAAAPAEQGKGKRVQPPWSPPEGTK) are disordered. C55 is a binding site for Zn(2+). G56 serves as a coordination point for L-cysteine. The short motif at 57–67 (PTVYDASHMGH) is the 'HIGH' region element. T96 serves as a coordination point for L-cysteine. Residues 101–104 (KIIK) carry the 'KIIK' region motif. Zn(2+)-binding residues include C348, H373, and E377. H373 contributes to the L-cysteine binding site. The 'KMSKS' region motif lies at 406–410 (KMSKS). Residue K409 coordinates ATP. Basic and acidic residues-rich tracts occupy residues 656-679 (KIEE…EAAK) and 686-717 (PPHE…KELS). Residues 656 to 719 (KIEEEKKRKK…DTEGKELSKG (64 aa)) form a disordered region.

The protein belongs to the class-I aminoacyl-tRNA synthetase family. As to quaternary structure, homodimer. Requires Zn(2+) as cofactor.

It is found in the cytoplasm. The enzyme catalyses tRNA(Cys) + L-cysteine + ATP = L-cysteinyl-tRNA(Cys) + AMP + diphosphate. Catalyzes the ATP-dependent ligation of cysteine to tRNA(Cys). The protein is Cysteine--tRNA ligase, cytoplasmic (CARS1) of Gallus gallus (Chicken).